The sequence spans 303 residues: Cell division protein ZipA (303 aa).

Over 1-6 (MMQDLR) the chain is Periplasmic. A helical transmembrane segment spans residues 7–27 (LILIIVGAIAIIALLLHGLWT). At 28 to 303 (SRKERSSLFR…RIRSTLGVQV (276 aa)) the chain is on the cytoplasmic side. 3 disordered regions span residues 39 to 61 (RPVKRHKHDRQNSFVDDSDDEAF), 66 to 85 (KPYAHKQVKSHQEYKAEPAI), and 124 to 159 (EQEPQLGLFEFEEQNESERNGSAIEEKSQEAAGEKE). 2 stretches are compositionally biased toward basic and acidic residues: residues 75 to 85 (SHQEYKAEPAI) and 139 to 159 (ESERNGSAIEEKSQEAAGEKE).

Belongs to the ZipA family. In terms of assembly, interacts with FtsZ via their C-terminal domains.

Its subcellular location is the cell inner membrane. In terms of biological role, essential cell division protein that stabilizes the FtsZ protofilaments by cross-linking them and that serves as a cytoplasmic membrane anchor for the Z ring. Also required for the recruitment to the septal ring of downstream cell division proteins. This chain is Cell division protein ZipA, found in Photorhabdus laumondii subsp. laumondii (strain DSM 15139 / CIP 105565 / TT01) (Photorhabdus luminescens subsp. laumondii).